The following is a 462-amino-acid chain: Protoheme IX farnesyltransferase, mitochondrial (462 aa).

The N-terminal 30 residues, 1–30 (MSYFPRTYAHLMRNVLAHNKGNIYLQIGTQ), are a transit peptide targeting the mitochondrion. A run of 7 helical transmembrane segments spans residues 158 to 178 (TILV…PASV), 234 to 254 (LIGT…VAIL), 274 to 294 (IINT…GWAA), 298 to 318 (LSHP…FPHF), 352 to 372 (YSIL…TDWY), 373 to 393 (YQID…KFYW), and 425 to 445 (FMAS…HKKG).

Belongs to the UbiA prenyltransferase family. As to quaternary structure, forms ~370 kDa homooligomeric complexes.

Its subcellular location is the mitochondrion. The protein localises to the mitochondrion membrane. It carries out the reaction heme b + (2E,6E)-farnesyl diphosphate + H2O = Fe(II)-heme o + diphosphate. It functions in the pathway porphyrin-containing compound metabolism; heme O biosynthesis; heme O from protoheme: step 1/1. Its activity is regulated as follows. Positively regulated by the hydroxylated intermediate (heme I) formed at the subsequent step, or by HAS/COX15 itself. Its function is as follows. Catalyzes the first reaction in the biosynthesis of heme A, a prosthetic group of mitochondrial cytochrome c oxidase (CcO). Heme A is synthesized from heme B by two sequential enzymatic reactions catalyzed by heme O synthase (HOS/COX10) and heme A synthase (HAS/COX15). HOS converts heme B (protoheme IX) to heme O by substitution of the vinyl group on carbon 2 of heme B porphyrin ring with a hydroxyethyl farnesyl side group. The sequence is that of Protoheme IX farnesyltransferase, mitochondrial (COX10) from Saccharomyces cerevisiae (strain ATCC 204508 / S288c) (Baker's yeast).